The primary structure comprises 272 residues: 3-methyl-2-oxobutanoate hydroxymethyltransferase (272 aa).

The Mg(2+) site is built by D51 and D90. 3-methyl-2-oxobutanoate-binding positions include D51–S52, D90, and K118. E120 serves as a coordination point for Mg(2+). The active-site Proton acceptor is E187.

This sequence belongs to the PanB family. In terms of assembly, homodecamer; pentamer of dimers. Mg(2+) is required as a cofactor.

It is found in the cytoplasm. The catalysed reaction is 3-methyl-2-oxobutanoate + (6R)-5,10-methylene-5,6,7,8-tetrahydrofolate + H2O = 2-dehydropantoate + (6S)-5,6,7,8-tetrahydrofolate. It functions in the pathway cofactor biosynthesis; (R)-pantothenate biosynthesis; (R)-pantoate from 3-methyl-2-oxobutanoate: step 1/2. Its function is as follows. Catalyzes the reversible reaction in which hydroxymethyl group from 5,10-methylenetetrahydrofolate is transferred onto alpha-ketoisovalerate to form ketopantoate. This is 3-methyl-2-oxobutanoate hydroxymethyltransferase from Xylella fastidiosa (strain M12).